The chain runs to 97 residues: Histone H1.C2 (97 aa).

Residues 24–97 (AAVPPKKAAP…KKAVKKAPKK (74 aa)) are disordered. A compositionally biased stretch (basic residues) spans 31–97 (AAPKKAVAKK…KKAVKKAPKK (67 aa)).

It localises to the nucleus. The protein resides in the chromosome. This chain is Histone H1.C2, found in Trypanosoma cruzi.